Reading from the N-terminus, the 190-residue chain is Biphenyl-2,3-diol 1,2-dioxygenase 2 (190 aa).

The VOC domain maps to 6–124 (KFAHVVLQTS…DGNFVELQID (119 aa)). H9, H72, and E120 together coordinate Fe cation.

Belongs to the extradiol ring-cleavage dioxygenase family. In terms of assembly, homohexamer. The cofactor is Fe(2+).

The catalysed reaction is biphenyl-2,3-diol + O2 = 2-hydroxy-6-oxo-6-phenylhexa-2,4-dienoate + H(+). It participates in xenobiotic degradation; biphenyl degradation; 2-hydroxy-2,4-pentadienoate and benzoate from biphenyl: step 3/4. In Rhodococcus globerulus, this protein is Biphenyl-2,3-diol 1,2-dioxygenase 2 (bphC2).